The primary structure comprises 95 residues: Ubiquinol-cytochrome-c reductase complex assembly factor 3 (95 aa).

Residues methionine 1–leucine 7 lie on the Mitochondrial matrix side of the membrane. The helical transmembrane segment at leucine 8 to valine 28 threads the bilayer. The mediates lipid-binding stretch occupies residues alanine 23–tryptophan 80. Over threonine 29–alanine 95 the chain is Mitochondrial intermembrane.

Belongs to the UQCC3 family. Associates with the ubiquinol-cytochrome c reductase complex (mitochondrial respiratory chain complex III(CIII) or cytochrome b-c1 complex). Interacts with UQCC1. Forms a complex, named COMC, composed of UQCC1, UQCC2; UQCC3 and UQCC4; mediates MT-CYB hemylation and association with the first nuclear-encoded complex III subunit UQCRQ. Post-translationally, probably cleaved by OMA1 under mitochondrial stress conditions.

The protein resides in the mitochondrion inner membrane. Its function is as follows. Required for the assembly of the ubiquinol-cytochrome c reductase complex (mitochondrial respiratory chain complex III or cytochrome b-c1 complex), mediating cytochrome b recruitment and probably stabilization within the complex. Thereby, plays an important role in ATP production by mitochondria. Cardiolipin-binding protein, it may also control the cardiolipin composition of mitochondria membranes and their morphology. In Bos taurus (Bovine), this protein is Ubiquinol-cytochrome-c reductase complex assembly factor 3.